A 334-amino-acid chain; its full sequence is DNA polymerase III subunit delta' (334 aa).

As to quaternary structure, the DNA polymerase III holoenzyme complex contains at least 10 different subunits organized into 3 functionally essential subassemblies: the Pol III core, the beta sliding clamp processivity factor and the clamp-loading complex. The Pol III core (subunits alpha, epsilon and theta) contains the polymerase and the 3'-5' exonuclease proofreading activities. The polymerase is tethered to the template via the dimeric beta sliding clamp processivity factor. The clamp-loading complex (also called gamma complex) assembles the beta sliding clamp onto the primed template and plays a central role in the organization and communication at the replication fork. The clamp-loading complex contains delta, delta', psi and chi, and 3 copies of either or both of two different DnaX proteins, gamma and tau. The DNA replisome complex has a single clamp loader (3 tau and 1 each of delta, delta', psi and chi subunits) which binds 3 Pol III cores (1 core on the leading strand and 2 on the lagging strand) each with a beta sliding clamp dimer. Additional proteins in the replisome are other copies of gamma, psi and chi, Ssb, DNA helicase and RNA primase. The clamp loader hydrolyzes ATP to assemble the beta processivity factor onto the primed template and plays a central role in the organization and communication at the replication fork; the minimal complex to load the beta sliding clamp on DNA is delta, delta', gamma.

It carries out the reaction DNA(n) + a 2'-deoxyribonucleoside 5'-triphosphate = DNA(n+1) + diphosphate. Part of the beta sliding clamp loading complex, which hydrolyzes ATP to load the beta clamp onto primed DNA to form the DNA replication pre-initiation complex. DNA polymerase III is a complex, multichain enzyme responsible for most of the replicative synthesis in bacteria. This DNA polymerase also exhibits 3' to 5' exonuclease activity. The gamma complex (gamma(3),delta,delta') is thought to load beta dimers onto DNA by binding ATP which alters the complex's conformation so it can bind beta sliding clamp dimers and open them at one interface. Primed DNA is recognized, ATP is hydrolyzed releasing the gamma complex and closing the beta sliding clamp ring around the primed DNA. This Escherichia coli (strain K12) protein is DNA polymerase III subunit delta' (holB).